The primary structure comprises 224 residues: MKKLLAAGIIGLLTVSIASPSFAAEKQADTNVAVLFDGSGSMVQKTGGERKIDIAKKSVKSFAELLPKDTNLMLRVFGHAGNNKLSGKALSCSTTETIYGLHPYEGSLFDNSLSELKPTGWTPIAKALADTRKEFEAFDADGKNVVYLITDGEETCGGDPAAEIEKLRASNVDTIVNIIGFNFDVKGNEEMKQAAVAGGGEYISANSADEFEQAWEKEAQKFTE.

An N-terminal signal peptide occupies residues 1–23 (MKKLLAAGIIGLLTVSIASPSFA). Residues 31–224 (NVAVLFDGSG…WEKEAQKFTE (194 aa)) enclose the VWFA domain.

To B.subtilis YwmC.

This is an uncharacterized protein from Bacillus subtilis (strain 168).